Consider the following 209-residue polypeptide: ATP-dependent Clp protease proteolytic subunit 2 (209 aa).

Serine 106 serves as the catalytic Nucleophile. Histidine 131 is an active-site residue.

The protein belongs to the peptidase S14 family. As to quaternary structure, fourteen ClpP subunits assemble into 2 heptameric rings which stack back to back to give a disk-like structure with a central cavity, resembling the structure of eukaryotic proteasomes.

The protein localises to the cytoplasm. The enzyme catalyses Hydrolysis of proteins to small peptides in the presence of ATP and magnesium. alpha-casein is the usual test substrate. In the absence of ATP, only oligopeptides shorter than five residues are hydrolyzed (such as succinyl-Leu-Tyr-|-NHMec, and Leu-Tyr-Leu-|-Tyr-Trp, in which cleavage of the -Tyr-|-Leu- and -Tyr-|-Trp bonds also occurs).. Functionally, cleaves peptides in various proteins in a process that requires ATP hydrolysis. Has a chymotrypsin-like activity. Plays a major role in the degradation of misfolded proteins. This chain is ATP-dependent Clp protease proteolytic subunit 2, found in Mesorhizobium japonicum (strain LMG 29417 / CECT 9101 / MAFF 303099) (Mesorhizobium loti (strain MAFF 303099)).